The chain runs to 285 residues: MLYLTKIRNAESEFTGNEQKIADFLRANVSELKSVSSRKMAKQLGISQSSIVKFAQKLGAQGFTELRMALIGEYSASREKTNATALHLHSSITSDDSLEVIARKLNREKEQALEQTCALFDYARLQKIIEVISKAPFIQITGLGGSALVGRDLSFKLMKIGYRVTCEADTHVQATVSQALKKGDVQIAISYSGSKKEIVLCAEVARKQGATVIAITSLTDSPLRRLAHYTLDTVSGETEWRSSSMSTRTAQNSVTDLLFVGLVQLNDVESLKMIERSSELTQRLK.

The HTH rpiR-type domain occupies M1–S77. The segment at residues S37–Q56 is a DNA-binding region (H-T-H motif). Residues I128–V268 form the SIS domain.

As to quaternary structure, homotetramer.

Its pathway is amino-sugar metabolism; N-acetylmuramate degradation [regulation]. In terms of biological role, represses the expression of the murPQ operon involved in the uptake and degradation of N-acetylmuramic acid (MurNAc). Binds to two adjacent inverted repeats within the operator region. MurNAc 6-phosphate, the substrate of MurQ, is the specific inducer that weakens binding of MurR to the operator. The protein is HTH-type transcriptional regulator MurR of Escherichia coli O7:K1 (strain IAI39 / ExPEC).